We begin with the raw amino-acid sequence, 1218 residues long: MLTKFETKSNRVKGLSFHPRRPWILASLHSGVIQMWDYRMGTLLDRFDEHDGPVRGVHFHATQPLFVSGGDDYKIKVWNYKTHRCLFTLHGHLDYIRTVQFHHEYPWIVSASDDQTIRIWNWQSRTCVAVLTGHNHYVMCASFHPKEDLVVSASLDQTVRVWDIGALRKKTVSPADDILRLTQMNTDLFGGVDAVVKYVLEGHDRGVNWASFHPTLPLIVSGADDRQVKLWRMNDTKAWEVDTLRGHMNNVSCVMFHAKQDIIVSNSEDKSIRVWDATKRTGIQTFRREHDRFWILAAHPEMNLLAAGHDNGMIVFKLERERPAFSVSGDTVFYVKDRFLRFFEYSTQKEVQLAPIRRPGSVSLNQSPRTLSYSPTENAVLICSDVDGGSYELYIVPKDSAGRTDYLQEAKKGAGGSAVFVARNRFAVLEKSSNQVLVKNLKNEIVKKSPLPIAMDAIYYAGTGNLLCKAEDRVTIFDLQQRLILGELQAPAVKYVVWSSDMESIALLSKHAVVIANKKLVHRCTLHETIRVKSGAWDENGVFIYTTLNHIKYCLPNGDSGIIKTLDVPIYITRAIGNNIFCLDRDGKNKLITVDASEYIFKLALLRKRYDHVMSMIKNSQLCGQAVISYLQQKGFPEVALHFVKDEKTRFNLALESGNIQIAVASAKEIDDKDHWYRLGIEALRQGNVGIVEYAYQRTKNFERLAFLYLITGYMDKVGFMCKIAGQNNNLMGQFHNALYLGDAMKRVEILENAGQLPLAYITAATHGLTEIADRLAAELGENIPSLPEGKTRSLLIPPAPLTASGDWPLLRVMRGIFEGGLDATGKAELEEDDEAAGADWGDEDLDMVDASEAMANGGDGFDAEEGEANEEDGEEGGWDLEDLELPPEAETPKNAGNALSVVFVAPPPGMPVSQIWTQKSSLAGEHAAAGNFDTAMRLLSRQLGIKNFAPLKPLFLDLHMGSHSYLRALATAPIIPVAVEKGWSESASPNVRGPPALVFTFSQMEDRLKAAYKATTEGKFPEALRQFLNILHTIPLIVVDSRREVDEVKELIEIVREYVLGLRMELKRKELRDDVNRQQELAAYFTNCKLQRVHMRLVLGSAMGLCYKQKNFATAEHFARMLLENNPNESQAKRARQVQQQCSGKKDSCELNYDYRNPFVVCGATYVPIYRGQKDVSCPYCGSRFVPSIEGQLCTICELAVVGADASGLLCSPTQLR.

WD repeat units lie at residues Thr7 to Asp48, Glu49 to Thr88, Gly91 to Thr132, Gly133 to Val172, Gly202 to Val241, Gly246 to Thr285, Arg288 to Ser326, Ser363 to Thr404, and Pro450 to Gln489. The disordered stretch occupies residues Ala854 to Pro893. Acidic residues predominate over residues Phe862–Pro888.

In terms of assembly, oligomeric complex that consists of at least the alpha, beta, beta', gamma, delta, epsilon and zeta subunits.

The protein localises to the cytoplasm. It localises to the golgi apparatus membrane. It is found in the cytoplasmic vesicle. The protein resides in the COPI-coated vesicle membrane. In terms of biological role, the coatomer is a cytosolic protein complex that binds to dilysine motifs and reversibly associates with Golgi non-clathrin-coated vesicles, which further mediate biosynthetic protein transport from the ER, via the Golgi up to the trans Golgi network. Coatomer complex is required for budding from Golgi membranes, and is essential for the retrograde Golgi-to-ER transport of dilysine-tagged proteins. In Oryza sativa subsp. japonica (Rice), this protein is Coatomer subunit alpha-3.